The primary structure comprises 501 residues: Ribose import ATP-binding protein RbsA 1 (501 aa).

ABC transporter domains follow at residues 5-241 and 252-495; these read LQLK…VGRK and APGD…VGKL. Position 37–44 (37–44) interacts with ATP; the sequence is GENGAGKS.

This sequence belongs to the ABC transporter superfamily. Ribose importer (TC 3.A.1.2.1) family. As to quaternary structure, the complex is composed of an ATP-binding protein (RbsA), two transmembrane proteins (RbsC) and a solute-binding protein (RbsB).

The protein localises to the cell inner membrane. It catalyses the reaction D-ribose(out) + ATP + H2O = D-ribose(in) + ADP + phosphate + H(+). Part of the ABC transporter complex RbsABC involved in ribose import. Responsible for energy coupling to the transport system. This is Ribose import ATP-binding protein RbsA 1 from Escherichia coli O157:H7.